A 395-amino-acid chain; its full sequence is Abhydrolase domain-containing protein (395 aa).

The AB hydrolase-1 domain maps to 117 to 331 (PTIVINHGLT…INAIDDPIAP (215 aa)). Active-site charge relay system residues include serine 200, aspartate 327, and histidine 356.

Belongs to the AB hydrolase superfamily. AB hydrolase 4 family.

The sequence is that of Abhydrolase domain-containing protein (abhd) from Dictyostelium discoideum (Social amoeba).